The chain runs to 442 residues: Armadillo-like helical domain containing protein 1 (442 aa).

The chain is Armadillo-like helical domain containing protein 1 from Bos taurus (Bovine).